The sequence spans 130 residues: Fluoride-specific ion channel FluC (130 aa).

4 consecutive transmembrane segments (helical) span residues 2 to 22, 35 to 55, 72 to 92, and 107 to 127; these read GLLLILVGIGGGLGAMSRFAL, IGILLCNIIGSLIIGMMAAFL, LFVTGFLGGFTTFSSFSLDIL, and ILVSVIVSLIAVILGFYFIMG. Na(+)-binding residues include Gly79 and Thr82.

This sequence belongs to the fluoride channel Fluc/FEX (TC 1.A.43) family.

The protein localises to the cell inner membrane. The catalysed reaction is fluoride(in) = fluoride(out). Na(+) is not transported, but it plays an essential structural role and its presence is essential for fluoride channel function. In terms of biological role, fluoride-specific ion channel. Important for reducing fluoride concentration in the cell, thus reducing its toxicity. This Francisella philomiragia subsp. philomiragia (strain ATCC 25017 / CCUG 19701 / FSC 153 / O#319-036) protein is Fluoride-specific ion channel FluC.